The primary structure comprises 540 residues: Type II methyltransferase M.AccI (540 aa).

Belongs to the N(4)/N(6)-methyltransferase family. As to quaternary structure, monomer.

It carries out the reaction a 2'-deoxyadenosine in DNA + S-adenosyl-L-methionine = an N(6)-methyl-2'-deoxyadenosine in DNA + S-adenosyl-L-homocysteine + H(+). Its function is as follows. A gamma subtype methylase, recognizes the double-stranded sequence 5'-GTMKAC-3', methylates A-5 on both strands, and protects the DNA from cleavage by the AccI endonuclease. The chain is Type II methyltransferase M.AccI (accIM) from Acinetobacter calcoaceticus.